Reading from the N-terminus, the 124-residue chain is Large ribosomal subunit protein bL12 (124 aa).

This sequence belongs to the bacterial ribosomal protein bL12 family. Homodimer. Part of the ribosomal stalk of the 50S ribosomal subunit. Forms a multimeric L10(L12)X complex, where L10 forms an elongated spine to which 2 to 4 L12 dimers bind in a sequential fashion. Binds GTP-bound translation factors.

In terms of biological role, forms part of the ribosomal stalk which helps the ribosome interact with GTP-bound translation factors. Is thus essential for accurate translation. In Nitrosomonas europaea (strain ATCC 19718 / CIP 103999 / KCTC 2705 / NBRC 14298), this protein is Large ribosomal subunit protein bL12.